Reading from the N-terminus, the 207-residue chain is Putative tributyltin chloride resistance protein (207 aa).

The interval 37–122 is slt-type domain; that stretch reads NLPIELALMP…YHAIAALNLG (86 aa). Glutamate 49 is an active-site residue.

It belongs to the transglycosylase Slt family.

The polypeptide is Putative tributyltin chloride resistance protein (tbtA) (Alteromonas sp. (strain M-1)).